Here is a 227-residue protein sequence, read N- to C-terminus: Endo-1,4-beta-xylanase 1 (227 aa).

The N-terminal stretch at 1-19 (MVSLKSVLAAATAVSSAIA) is a signal peptide. The region spanning 37 to 225 (QVTPNAEGWH…SSGESDIYVQ (189 aa)) is the GH11 domain. Glu121 functions as the Nucleophile in the catalytic mechanism. The active-site Proton donor is the Glu212.

This sequence belongs to the glycosyl hydrolase 11 (cellulase G) family.

It carries out the reaction Endohydrolysis of (1-&gt;4)-beta-D-xylosidic linkages in xylans.. Its pathway is glycan degradation; xylan degradation. This Humicola insolens (Soft-rot fungus) protein is Endo-1,4-beta-xylanase 1.